Consider the following 293-residue polypeptide: 4-diphosphocytidyl-2-C-methyl-D-erythritol kinase (293 aa).

Lys16 is an active-site residue. 99 to 109 (PMGAGLGGGSS) serves as a coordination point for ATP. The active site involves Asp141.

This sequence belongs to the GHMP kinase family. IspE subfamily.

The enzyme catalyses 4-CDP-2-C-methyl-D-erythritol + ATP = 4-CDP-2-C-methyl-D-erythritol 2-phosphate + ADP + H(+). The protein operates within isoprenoid biosynthesis; isopentenyl diphosphate biosynthesis via DXP pathway; isopentenyl diphosphate from 1-deoxy-D-xylulose 5-phosphate: step 3/6. Functionally, catalyzes the phosphorylation of the position 2 hydroxy group of 4-diphosphocytidyl-2C-methyl-D-erythritol. The protein is 4-diphosphocytidyl-2-C-methyl-D-erythritol kinase of Paraburkholderia phytofirmans (strain DSM 17436 / LMG 22146 / PsJN) (Burkholderia phytofirmans).